Here is a 164-residue protein sequence, read N- to C-terminus: Cytochrome c-type biogenesis protein CcmE (164 aa).

The Cytoplasmic segment spans residues 1–8; that stretch reads MNPRRQKR. The helical; Signal-anchor for type II membrane protein transmembrane segment at 9–29 threads the bilayer; it reads LIVISAIVLVIGAAIGLMLYA. Residues 30-164 lie on the Periplasmic side of the membrane; it reads LSQNIDLFYT…QAYSTPKVSG (135 aa). Residues His132 and Tyr136 each contribute to the heme site.

The protein belongs to the CcmE/CycJ family.

It is found in the cell inner membrane. In terms of biological role, heme chaperone required for the biogenesis of c-type cytochromes. Transiently binds heme delivered by CcmC and transfers the heme to apo-cytochromes in a process facilitated by CcmF and CcmH. The protein is Cytochrome c-type biogenesis protein CcmE of Pseudoalteromonas atlantica (strain T6c / ATCC BAA-1087).